A 284-amino-acid polypeptide reads, in one-letter code: MTAQIIDGKAIAQSIRTKLSEKVTARKEAGQRIPGLAVVLVGADPASQVYVGSKRKACEEVGFISRSYDLETSCSEDELLSLIDSLNEDPTIDGILVQLPLPAHIEDSKVIERIRPDKDVDGFHPYNVGRLAQRIPVLRSCTPMGIMTLIKSTGVDTYGLDAVVVGASNIVGRPMTLELLLAGCTTTTCHRFTKNLEQKIRIADLVVVAVGKPGFIPGEWIKPGAIVIDVGINRLDNGTLVGDVQYDVAAQNASFITPVPGGVGPMTIASLLENTLYAAEQYHD.

Residues 166 to 168 (GAS) and Ile-232 contribute to the NADP(+) site.

Belongs to the tetrahydrofolate dehydrogenase/cyclohydrolase family. In terms of assembly, homodimer.

It carries out the reaction (6R)-5,10-methylene-5,6,7,8-tetrahydrofolate + NADP(+) = (6R)-5,10-methenyltetrahydrofolate + NADPH. It catalyses the reaction (6R)-5,10-methenyltetrahydrofolate + H2O = (6R)-10-formyltetrahydrofolate + H(+). The protein operates within one-carbon metabolism; tetrahydrofolate interconversion. Catalyzes the oxidation of 5,10-methylenetetrahydrofolate to 5,10-methenyltetrahydrofolate and then the hydrolysis of 5,10-methenyltetrahydrofolate to 10-formyltetrahydrofolate. This chain is Bifunctional protein FolD, found in Shewanella baltica (strain OS195).